We begin with the raw amino-acid sequence, 1242 residues long: Reverse gyrase 1 (1242 aa).

Residues 6–46 form an RG N-terminal-type zinc finger; that stretch reads KVPPSIYTRSCPNCGGNISSQRLFNGSVCESCLKDDREFSN. 4 residues coordinate Zn(2+): Cys16, Cys19, Cys34, and Cys37. ATP contacts are provided by residues Gln93 and 110–117; that span reads APPGLGKT. A Helicase ATP-binding domain is found at 97 to 298; sequence TIRFLRGESF…SLMGFRPGSS (202 aa). The DEAD box motif lies at 214–217; it reads DDVD. The segment at 615–1242 is topoisomerase I; that stretch reads LSVKTTLFIV…ELYNEIQTIS (628 aa). The region spanning 619–785 is the Toprim domain; that stretch reads TTLFIVESPN…NIKRAEFHEV (167 aa). Glu625 is a binding site for Mg(2+). An RG C-terminal-type; atypical zinc finger spans residues 703–731; sequence IKKCEKGHQIVKDLSQNKCPICGSRIVTD. Zn(2+) contacts are provided by Cys706, His710, Cys721, and Cys724. Asp754 is a Mg(2+) binding site. A Topo IA-type catalytic domain is found at 801 to 1242; it reads NDNLVKSQIV…ELYNEIQTIS (442 aa). Catalysis depends on Tyr965, which acts as the O-(5'-phospho-DNA)-tyrosine intermediate.

This sequence in the N-terminal section; belongs to the DEAD box helicase family. DDVD subfamily. In the C-terminal section; belongs to the type IA topoisomerase family. As to quaternary structure, monomer. It depends on Zn(2+) as a cofactor. Mg(2+) is required as a cofactor.

The protein localises to the cytoplasm. It carries out the reaction ATP + H2O = ADP + phosphate + H(+). With respect to regulation, at least one of the two reverse gyrase proteins is inhibited by actinomycin D. Highly sensitive to NaCl concentrations, maximal positive supercoiling is observed with 10 mM NaCl; as NaCl rises, supercoiling decreases. At 300 mM NaCl relaxes but does not introduce positive supercoils into negatively supercoiled substrate, at 400 mM NaCl does not relax DNA. Its function is as follows. Modifies the topological state of DNA by introducing positive supercoils in an ATP-dependent process. Increases the linking number in steps of +1. Involved in homeostatic control of DNA topology in balance with type II topoisomerase 6 (TopoVI); levels of TopoVI are constant at 80 and 88 degrees Celsius and TopoVI is probably less active at 88 degrees (characterized enzyme is from S.shibatae B12), so reverse gyrase mediates most of the fine-tuning of DNA topology. Changes the DNA linking number step-by-step in a distributive manner. At low protein to DNA ratios mostly relaxes negatively supercoiled substrate, as ratios rise more positive supercoils are introduced. At 90 degrees Celsius introduces 19 positive supercoils into pTZ18R DNA (probably 2860 bp), less than TopR2. Relaxes negatively supercoiled DNA in the absence of ATP. It cleaves transiently a single DNA strand and remains covalently bound to the 5' DNA end through a tyrosine residue. May be involved in DNA damage response. Its activity is inhibited by the DNA-binding protein 7d (Sso7d), suggesting that the Sso7d activity might counteract the overwinding effect of reverse gyrase. In terms of biological role, resolves 4-way Holliday junctions (HJ) with 20 bases in each arm in vitro, distorting the junction. Very high protein levels are required, but total enzyme content of the cell (there are 2 reverse gyrases in this organism) is estimated to be 20-200 molecules/cell. HJ resolution does not require either ATPase activity or the active tyrosine. The individual domains do not resolve HJs but do so when mixed. Also unwinds a fork substrate. Functionally, there are 2 genes for this protein in the cell. During exponential growth this is the less expressed isoform (about 52 molecules per cell at 80 degrees Celsius, about 28 molecules at 88 degrees Celsius); this isoform is more active at higher temperature. Grows actively at both 80 and 88 degrees Celsius; survives a long exposure at 45 degrees Celsius without DNA replication or cell division occurring. Experiments using whole cell extracts do not distinguish which isoform is present, the results are probably a mixture of the two forms. This is Reverse gyrase 1 from Saccharolobus solfataricus (strain ATCC 35092 / DSM 1617 / JCM 11322 / P2) (Sulfolobus solfataricus).